The chain runs to 395 residues: S-adenosylmethionine synthase (395 aa).

An ATP-binding site is contributed by His-16. Asp-18 is a Mg(2+) binding site. Glu-44 contributes to the K(+) binding site. Glu-57 and Gln-100 together coordinate L-methionine. A flexible loop region spans residues 100 to 110 (QSPDIAQGVDD). ATP-binding positions include 174–176 (DAK), 241–242 (RF), Asp-250, 256–257 (RK), Ala-273, and Lys-277. L-methionine is bound at residue Asp-250. Residue Lys-281 participates in L-methionine binding.

This sequence belongs to the AdoMet synthase family. As to quaternary structure, homotetramer; dimer of dimers. It depends on Mg(2+) as a cofactor. The cofactor is K(+).

The protein resides in the cytoplasm. The enzyme catalyses L-methionine + ATP + H2O = S-adenosyl-L-methionine + phosphate + diphosphate. The protein operates within amino-acid biosynthesis; S-adenosyl-L-methionine biosynthesis; S-adenosyl-L-methionine from L-methionine: step 1/1. In terms of biological role, catalyzes the formation of S-adenosylmethionine (AdoMet) from methionine and ATP. The overall synthetic reaction is composed of two sequential steps, AdoMet formation and the subsequent tripolyphosphate hydrolysis which occurs prior to release of AdoMet from the enzyme. The polypeptide is S-adenosylmethionine synthase (Limosilactobacillus reuteri (strain DSM 20016) (Lactobacillus reuteri)).